The following is a 599-amino-acid chain: MKHIRNFSIIAHIDHGKSTLSDRLIQICGGLTEREMAAQVLDSMDLERERGITIKAQSVTLDYHAKDGETYQLNFIDTPGHVDFSYEVSRSLAACEGALLVVDAGQGVEAQTLANCYTAMEMDLEVVPVLNKIDLPAADPDRVSQEIEDIVGIDATDAVRCSAKTGVGVPDVLERLVRDIPPPEGDPEGPLQALIIDSWFDNYLGVVSLVRIKNGTMRKGEKIKVMSTGQIYNADRLGIFTPKREDTDVLNCGEVGWLVCAIKDILGAPVGDTLTLARHPAEKALPGFKKVKPQVYAGLFPISSDDYEAFRDALGKLSLNDASLFYEPESSTALGFGFRCGFLGLLHMEIIQERLEREYDLELITTAPTVVYEVQTTDGETVYVDSPGKLPPLNNIEELREPIAECHMLLPQEYLGNVITLCIEKRGVQTNMVYHGNQVALTYDIPMAEVVLDFFDRLKSTSRGYASLDYNFKRFTASDMVRVDVLINSERVDALALITHRDNSQYRGRELVEKMKDLIPRQQFDIAIQAAIGNHIIARSTVKQLRKNVLAKCYGGDVSRKKKLLQKQKDGKKRMKQVGNVELPQEAFLAILHVGKDSK.

Positions 2–184 constitute a tr-type G domain; sequence KHIRNFSIIA…RLVRDIPPPE (183 aa). Residues 14 to 19 and 131 to 134 contribute to the GTP site; these read DHGKST and NKID.

Belongs to the TRAFAC class translation factor GTPase superfamily. Classic translation factor GTPase family. LepA subfamily.

The protein resides in the cell inner membrane. It catalyses the reaction GTP + H2O = GDP + phosphate + H(+). In terms of biological role, required for accurate and efficient protein synthesis under certain stress conditions. May act as a fidelity factor of the translation reaction, by catalyzing a one-codon backward translocation of tRNAs on improperly translocated ribosomes. Back-translocation proceeds from a post-translocation (POST) complex to a pre-translocation (PRE) complex, thus giving elongation factor G a second chance to translocate the tRNAs correctly. Binds to ribosomes in a GTP-dependent manner. This chain is Elongation factor 4, found in Erwinia tasmaniensis (strain DSM 17950 / CFBP 7177 / CIP 109463 / NCPPB 4357 / Et1/99).